The sequence spans 376 residues: Calcium uniporter protein, mitochondrial (376 aa).

The N-terminal 34 residues, 1 to 34, are a transit peptide targeting the mitochondrion; that stretch reads MAAKVCRSVLLLSRSSGAVASSAYPAFGVSSQRH. Topologically, residues 35-257 are mitochondrial matrix; it reads QGTKTEALSM…LSKKAERRTT (223 aa). The interval 99 to 189 is N-terminal MCU domain; sequence VSVVYQNGLP…TSYLVQPPRR (91 aa). The stretch at 213–254 forms a coiled coil; the sequence is TLRIEEHQLNKERELIGRLEDLNSQLQPLEKVKEELSKKAER. Residues 258 to 280 form a helical membrane-spanning segment; sequence WVLWGGMAYMATQFGILARLTWW. Over 281-289 the chain is Mitochondrial intermembrane; that stretch reads EYSWDIMEP. A Selectivity filter motif is present at residues 284 to 292; that stretch reads WDIMEPVTY. Glu288 contacts Ca(2+). Residues 290 to 309 form a helical membrane-spanning segment; the sequence is VTYFITYGTAMAMYAYFVLT. Residues 309–314 form a juxtamembrane helix region; it reads TRQEYL. At 310–376 the chain is on the mitochondrial matrix side; it reads RQEYLYPDAR…PIQQIDTSKD (67 aa). Residues 336–363 adopt a coiled-coil conformation; the sequence is FDIEKYNKLKDAIAEAELDLKRLRDPLQ.

The protein belongs to the MCU (TC 1.A.77) family. Homotetramer. Component of the uniplex complex.

It is found in the mitochondrion inner membrane. The catalysed reaction is Ca(2+)(in) = Ca(2+)(out). With respect to regulation, MCU channel activity is regulated by the heterodimer composed of micu1 and micu2, which act as calcium-sensors. At low calcium levels, micu1 occludes the pore of the MCU channel, preventing mitochondrial calcium uptake. At higher calcium levels, calcium-binding to micu1 and micu2 induces a conformational change that weakens mcu-micu1 interactions and moves the micu1-micu2 heterodimer away from the pore, allowing calcium permeation through the channel. MCU channel activity is gated by emre/smdt1 via the juxtamembrane helix loop. Inhibited by ruthenium red or its derivative Ru360. Functionally, channel-forming and calcium-conducting subunit of the mitochondrial inner membrane calcium uniporter complex (uniplex), which mediates calcium uptake into the mitochondrial matrix. Mcu channel activity is regulated by the calcium-sensor subunits of the uniplex micu1 and micu2. Mitochondrial calcium homeostasis plays key roles in cellular physiology and regulates ATP production, cytoplasmic calcium signals and activation of cell death pathways. Involved in buffering the amplitude of systolic calcium rises in cardiomyocytes. While dispensable for baseline homeostatic cardiac function, acts as a key regulator of short-term mitochondrial calcium loading underlying a 'fight-or-flight' response during acute stress: acts by mediating a rapid increase of mitochondrial calcium in pacemaker cells. Mitochondrial calcium uptake in skeletal muscle cells is involved in muscle size in adults. The polypeptide is Calcium uniporter protein, mitochondrial (Danio rerio (Zebrafish)).